A 64-amino-acid polypeptide reads, in one-letter code: Potassium channel toxin kappa-KTx 4.1 (64 aa).

A signal peptide spans 1–26 (MKSTLMTASLLILVVLFIIDYASVYA). Residues 27–38 (EFIDGEISLERE) constitute a propeptide that is removed on maturation. 2 cysteine pairs are disulfide-bonded: cysteine 43–cysteine 61 and cysteine 47–cysteine 57.

It belongs to the short scorpion toxin superfamily. Potassium channel inhibitor kappa-KTx family. Kappa-KTx 4 subfamily. In terms of tissue distribution, expressed by the venom gland.

The protein localises to the secreted. Potassium channel inhibitor (Kv). In Heterometrus petersii (Asian forest scorpion), this protein is Potassium channel toxin kappa-KTx 4.1.